Reading from the N-terminus, the 142-residue chain is MAESVIEKCTEQVSNRFKLALLASQRTHDLNTGASNPVQSARFKGHKNTIISLYEIAERQVDTHELFSLLVSRCKEYMKGNLSNTYSSNTSKLEKLLNFSNDQFNTDADVDQESTDIQDDEVENEMSNQDSEDIDDEVDNEE.

The disordered stretch occupies residues 104–142; the sequence is FNTDADVDQESTDIQDDEVENEMSNQDSEDIDDEVDNEE. Over residues 108–142 the composition is skewed to acidic residues; it reads ADVDQESTDIQDDEVENEMSNQDSEDIDDEVDNEE.

It belongs to the RNA polymerase subunit omega family. As to quaternary structure, the RNAP catalytic core consists of 2 alpha, 1 beta, 1 beta' and 1 omega subunit. When a sigma factor is associated with the core the holoenzyme is formed, which can initiate transcription.

The enzyme catalyses RNA(n) + a ribonucleoside 5'-triphosphate = RNA(n+1) + diphosphate. Functionally, promotes RNA polymerase assembly. Latches the N- and C-terminal regions of the beta' subunit thereby facilitating its interaction with the beta and alpha subunits. This chain is DNA-directed RNA polymerase subunit omega, found in Wolbachia sp. subsp. Brugia malayi (strain TRS).